Consider the following 973-residue polypeptide: RNA-directed RNA polymerase (973 aa).

Positions 96–264 (HTHGRAAKFR…RRIIFLEPAA (169 aa)) are capping. The RdRp catalytic domain maps to 558-683 (HGTLESDYSR…AHENGLEPAL (126 aa)). Catalysis depends on aspartate 669, which acts as the For RdRp/TNTase activity. Positions 853-973 (VVGPGPRVET…TTTAVVHASA (121 aa)) are disordered. Residues 882 to 891 (GHSERRDKSS) show a composition bias toward basic and acidic residues. Composition is skewed to low complexity over residues 924–935 (GSGNRRGPTNGR) and 955–973 (PPVS…HASA).

Belongs to the nodaviridae RNA polymerase family. As to quaternary structure, homododecamer. Forms 2 stacked rings of 35-nm in diameter, arranged in a crown-like structure at the opening of virus-induced replication vesicles. Interacts with protein B2. Mn(2+) serves as cofactor.

Its subcellular location is the host mitochondrion outer membrane. The catalysed reaction is RNA(n) + a ribonucleoside 5'-triphosphate = RNA(n+1) + diphosphate. Functionally, RNA-dependent RNA polymerase, which replicates the viral genome composed of 2 RNA segments, RNA1 and RNA2. Does not need an exogenous primer. Also possesses a terminal nucleotidyl transferase (TNTase) activity. The TNTase catalyzes the addition of nucleotide to the 3'-end of plus- and minus-stranded RNAs, probably to repair the 3'-end nucleotide loss. Forms the open necked connection to the cytosol of the virus-induced replication vesicles. Mediates viral RNA1 recruitment. The chain is RNA-directed RNA polymerase from Spodoptera eridania (Southern armyworm).